Here is a 254-residue protein sequence, read N- to C-terminus: E3 ubiquitin-protein ligase NEURL3 (254 aa).

The region spanning 17-174 is the NHR domain; sequence ALSFHGNATG…TTKAIELLDP (158 aa). Residues 197–236 form an RING-type zinc finger; it reads CVICFHNTANTRLMPCGHSHFCGSCAWHIFKDTARCPICR.

Expressed in alveolar epithelial type II cells.

It is found in the cytoplasm. The catalysed reaction is S-ubiquitinyl-[E2 ubiquitin-conjugating enzyme]-L-cysteine + [acceptor protein]-L-lysine = [E2 ubiquitin-conjugating enzyme]-L-cysteine + N(6)-ubiquitinyl-[acceptor protein]-L-lysine.. It participates in protein modification; protein ubiquitination. Its function is as follows. E3 ubiquitin-protein ligase that plays a role in various biological processes such as lung development or innate immunity. Seems to utilize UBE2E1. Promotes innate antiviral response by catalyzing 'Lys-63'-linked ubiquitination of IRF7. Plays an essential role in TLR4-mediated activation of MAPK pathways by promoting 'Lys-48'-linked polyubiquitination of the phosphatase DUSP1/MKP1. This chain is E3 ubiquitin-protein ligase NEURL3 (Neurl3), found in Mus musculus (Mouse).